We begin with the raw amino-acid sequence, 589 residues long: Muscarinic acetylcholine receptor M3 (589 aa).

The Extracellular segment spans residues 1–66 (MTLHSNSTTS…DPLGGHTIWQ (66 aa)). 5 N-linked (GlcNAc...) asparagine glycosylation sites follow: Asn6, Asn15, Asn41, Asn48, and Asn52. Residues 67 to 90 (VVFIAFLTGFLALVTIIGNILVIV) traverse the membrane as a helical segment. Residues 91-103 (AFKVNKQLKTVNN) are Cytoplasmic-facing. A helical transmembrane segment spans residues 104 to 129 (YFLLSLACADLIIGVISMNLFTTYII). Topologically, residues 130–141 (MNRWALGNLACD) are extracellular. Cysteines 140 and 220 form a disulfide. The helical transmembrane segment at 142–163 (LWLSIDYVASNASVMNLLVISF) threads the bilayer. Over 164-183 (DRYFSITRPLTYRAKRTTKR) the chain is Cytoplasmic. The helical transmembrane segment at 184-205 (AGVMIGLAWVISFVLWAPAILF) threads the bilayer. The Extracellular portion of the chain corresponds to 206-228 (WQYFVGKRTVPPGECFIQFLSEP). The chain crosses the membrane as a helical span at residues 229–251 (TITFGTAIAAFYMPVTIMTILYW). The Cytoplasmic portion of the chain corresponds to 252-490 (RIYKETEKRT…SLIKEKKAAQ (239 aa)). A Basolateral sorting signal motif is present at residues 274–280 (AEAENFV). The tract at residues 323-356 (AEQMDQDHSSSDSWNNNDAAASLENSASSDEEDI) is disordered. The segment covering 333 to 344 (SDSWNNNDAAAS) has biased composition (low complexity). At Ser384 the chain carries Phosphoserine. The chain crosses the membrane as a helical span at residues 491-513 (TLSAILLAFIITWTPYNIMVLVN). Topologically, residues 514-525 (TFCDSCIPKTYW) are extracellular. A disulfide bridge connects residues Cys516 and Cys519. Residues 526–545 (NLGYWLCYINSTVNPVCYAL) traverse the membrane as a helical segment. Topologically, residues 546–589 (CNKTFRTTFKTLLLCQCDKRKRRKQQYQQRQSVIFHKRVPEQAL) are cytoplasmic.

The protein belongs to the G-protein coupled receptor 1 family. Muscarinic acetylcholine receptor subfamily. CHRM3 sub-subfamily. As to quaternary structure, homodimer; the dimers can form tetramers. Interacts with NALCN. Interacts with TMEM147.

The protein resides in the cell membrane. Its subcellular location is the postsynaptic cell membrane. It localises to the basolateral cell membrane. The protein localises to the endoplasmic reticulum membrane. In terms of biological role, the muscarinic acetylcholine receptor mediates various cellular responses, including inhibition of adenylate cyclase, breakdown of phosphoinositides and modulation of potassium channels through the action of G proteins. Primary transducing effect is Pi turnover. This is Muscarinic acetylcholine receptor M3 (Chrm3) from Rattus norvegicus (Rat).